Reading from the N-terminus, the 834-residue chain is MAASAAATAAASAATAASAASGSPGSGEGSAGGEKRPAASSAAAASAAASSPAGGGGEAQELLEHCGVCRERLRPERDPRLLPCLHSACSACLGPATPAAANNSGDGGSAGDGAMVDCPVCKQQCYSKDIVENYFMRDSGSKASSDSQDANQCCTSCEDNAPATSYCVECSEPLCETCVEAHQRVKYTKDHTVRSTGPAKTRDGERTVYCNVHKHEPLVLFCESCDTLTCRDCQLNAHKDHQYQFLEDAVRNQRKLLASLVKRLGDKHATLQKNTKEVRSSIRQVSDVQKRVQVDVKMAILQIMKELNKRGRVLVNDAQKVTEGQQERLERQHWTMTKIQKHQEHILRFASWALESDNNTALLLSKKLIYFQLHRALKMIVDPVEPHGEMKFQWDLNAWTKSAEAFGKIVAERPGTNSTGPGPMAPPRAPGPLSKQGSGSSQPMEVQEGYGFGSDDPYSSAEPHVSGMKRSRSGEGEVSGLLRKVPRVSLERLDLDLTSDSQPPVFKVFPGSTTEDYNLIVIERGAAAAAAGQAGTVPPGAPGAPPLPGMAIVKEEETEAAIGAPPAAPEGPETKPVLMPLTEGPGAEGPRLASPSGSTSSGLEVVAPEVTSAPVSGPGILDDSATICRVCQKPGDLVMCNQCEFCFHLDCHLPALQDVPGEEWSCSLCHVLPDLKEEDGSLSLDGADSTGVVAKLSPANQRKCERVLLALFCHEPCRPLHQLATDSTFSMEQPGGTLDLTLIRARLQEKLSPPYSSPQEFAQDVGRMFKQFNKLTEDKADVQSIIGLQRFFETRMNDAFGDTKFSAVLVEPPPLNLPSAGLSSQELSGPGDGP.

Alanine 2 is subject to N-acetylalanine. Over residues alanine 13–serine 23 the composition is skewed to low complexity. The disordered stretch occupies residues alanine 13–glycine 56. A phosphoserine mark is found at serine 23, serine 26, and serine 30. A Glycyl lysine isopeptide (Lys-Gly) (interchain with G-Cter in SUMO2) cross-link involves residue lysine 35. The span at alanine 38–proline 52 shows a compositional bias: low complexity. Serine 51 carries the phosphoserine modification. The segment at cysteine 66–lysine 122 adopts an RING-type zinc-finger fold. Lysine 128 is covalently cross-linked (Glycyl lysine isopeptide (Lys-Gly) (interchain with G-Cter in SUMO2)). Serine 139 is subject to Phosphoserine. The B box-type 1 zinc-finger motif lies at aspartate 149 to threonine 196. Residues cysteine 154, cysteine 157, cysteine 178, and histidine 182 each contribute to the Zn(2+) site. Lysine 200 is covalently cross-linked (Glycyl lysine isopeptide (Lys-Gly) (interchain with G-Cter in SUMO2)). The segment at glutamate 205–leucine 246 adopts a B box-type 2 zinc-finger fold. Residues cysteine 210, histidine 213, cysteine 233, and histidine 238 each coordinate Zn(2+). Residues glutamate 247–leucine 377 are leucine zipper alpha helical coiled-coil region. Residues aspartate 248–leucine 377 are interaction with MAGEC2. Glycyl lysine isopeptide (Lys-Gly) (interchain with G-Cter in SUMO2) cross-links involve residues lysine 255 and lysine 262. At lysine 267 the chain carries N6-acetyllysine. Lysine 273 is covalently cross-linked (Glycyl lysine isopeptide (Lys-Gly) (interchain with G-Cter in SUMO2)). Position 305 is an N6-acetyllysine; alternate (lysine 305). Lysine 305 participates in a covalent cross-link: Glycyl lysine isopeptide (Lys-Gly) (interchain with G-Cter in SUMO2); alternate. A Glycyl lysine isopeptide (Lys-Gly) (interchain with G-Cter in SUMO2) cross-link involves residue lysine 320. Lysine 341 is modified (N6-acetyllysine). Lysine 367 participates in a covalent cross-link: Glycyl lysine isopeptide (Lys-Gly) (interchain with G-Cter in SUMO2). An involved in binding PPP1CA region spans residues lysine 367 to phenylalanine 371. N6-acetyllysine; alternate is present on lysine 378. Lysine 378 participates in a covalent cross-link: Glycyl lysine isopeptide (Lys-Gly) (interchain with G-Cter in SUMO2); alternate. Lysine 378 participates in a covalent cross-link: Glycyl lysine isopeptide (Lys-Gly) (interchain with G-Cter in SUMO1); alternate. Lysine 408 participates in a covalent cross-link: Glycyl lysine isopeptide (Lys-Gly) (interchain with G-Cter in SUMO2). A disordered region spans residues glutamate 412–glycine 480. Residue serine 418 is modified to Phosphoserine. Residue lysine 435 forms a Glycyl lysine isopeptide (Lys-Gly) (interchain with G-Cter in SUMO2) linkage. Over residues lysine 435 to methionine 444 the composition is skewed to polar residues. Phosphoserine is present on residues serine 438, serine 440, and serine 454. Lysine 469 is covalently cross-linked (Glycyl lysine isopeptide (Lys-Gly) (interchain with G-Cter in SUMO2); alternate). Lysine 469 is covalently cross-linked (Glycyl lysine isopeptide (Lys-Gly) (interchain with G-Cter in SUMO1); alternate). Position 470 is a citrulline (arginine 470). Residue serine 471 is modified to Phosphoserine. At arginine 472 the chain carries Citrulline. A phosphoserine mark is found at serine 473, serine 479, and serine 489. Residues glycine 476–threonine 513 are HP1 box. Positions leucine 481–aspartate 494 match the PxVxL motif motif. Threonine 498 carries the phosphothreonine modification. Residue serine 501 is modified to Phosphoserine. Lysine 507 is covalently cross-linked (Glycyl lysine isopeptide (Lys-Gly) (interchain with G-Cter in SUMO2)). Residue lysine 554 forms a Glycyl lysine isopeptide (Lys-Gly) (interchain with G-Cter in SUMO2); alternate linkage. Residue lysine 554 forms a Glycyl lysine isopeptide (Lys-Gly) (interchain with G-Cter in SUMO); alternate linkage. Residue lysine 575 forms a Glycyl lysine isopeptide (Lys-Gly) (interchain with G-Cter in SUMO2) linkage. The interval leucine 581–glycine 602 is disordered. A Phosphoserine modification is found at serine 594. The PHD-type zinc-finger motif lies at alanine 625–leucine 672. A Glycyl lysine isopeptide (Lys-Gly) (interchain with G-Cter in SUMO) cross-link involves residue lysine 676. Phosphoserine is present on residues serine 683, serine 689, and serine 697. In terms of domain architecture, Bromo spans lysine 695–alanine 799. Residue lysine 750 forms a Glycyl lysine isopeptide (Lys-Gly) (interchain with G-Cter in SUMO2); alternate linkage. Lysine 750 is covalently cross-linked (Glycyl lysine isopeptide (Lys-Gly) (interchain with G-Cter in SUMO1); alternate). A Glycyl lysine isopeptide (Lys-Gly) (interchain with G-Cter in SUMO); alternate cross-link involves residue lysine 750. Serine 752 carries the phosphoserine modification. The residue at position 755 (tyrosine 755) is a Phosphotyrosine. A Phosphoserine modification is found at serine 757. Residues lysine 770, lysine 774, and lysine 779 each carry the N6-acetyllysine; alternate modification. Residues lysine 770, lysine 774, and lysine 779 each participate in a glycyl lysine isopeptide (Lys-Gly) (interchain with G-Cter in SUMO2); alternate cross-link. Lysine 779 participates in a covalent cross-link: Glycyl lysine isopeptide (Lys-Gly) (interchain with G-Cter in SUMO1); alternate. Serine 784 is subject to Phosphoserine. A Glycyl lysine isopeptide (Lys-Gly) (interchain with G-Cter in SUMO2) cross-link involves residue lysine 804. The residue at position 824 (serine 824) is a Phosphoserine; by ATM and ATR and dsDNA kinase.

Belongs to the TRIM/RBCC family. Oligomer; the RBCC domain homotrimerizes and interacts with one molecule of KRAB to form the KRAB-KAP1 corepressor complex. Interacts with SETX. Binding to a KRAB domain is an absolute requirement for silencing gene expression. Interacts with a number of KRAB-ZFP proteins including ZNF10, ZFP53, ZFP68, ZNF382 and ZNF256. Interacts with NCOR1, NR3C1 and CHD3. Interacts with CEBPB (via the RING-type and PHD-type zinc fingers). Interacts with CBX5 (via the PxVxL motif); the interaction occurs in interphase nuclei and competes for binding POGZ. Interacts with POGZ; the interaction competes for interaction with CBX5. Interacts with SETDB1; the interaction is enhanced by KAP1 sumoylation, stimulates SETDB1 histone methyltransferase activity and gene silencing. Interacts (via the PHD-type zinc finger) with UBE2I; the interaction is required for sumoylation and repressor activity. Component of the TRIM28/KAP1-ERBB4-MDM2 complex involved in connecting growth factor and DNA damage responses. Interacts directly with ERBB4; the interaction represses ERBB4-mediated transcription activity. Interacts with MDM2; the interaction contributes to p53/TP53 inactivation. Component of the TRIM28/KAP1-MDM2-p53/TP53; involved in regulating p53/TP53 stabilization and activity. Interacts (via the leucine zipper alpha helical coiled-coil) with E2F1 (central region); the interaction inhibits E2F1 acetylation and transcriptional activity. Interacts with PPP1CA; the interaction dephosphorylates TRIM28 at Ser-824 and forms a complex at the p21 promoter site. Interacts with PPP1CB; the interaction is weak but is increased on dephosphorylation at Ser-824. Interacts with CEBPB and NR3C1. Interacts with CBX5 (via the PxVxL motif); the interaction occurs in interphase nuclei and competes for binding POGZ. Component of a ternary complex that includes TRIM28, a HP1 protein (CBX1, CBX3 OR CBX5), a KRAB domain-containing protein, and DNA. Interacts with SMARCAD1. Interacts with, and sumoylates IRF7. Interacts with MAGEC2. Part of a complex composed of TRIM28, HDAC1, HDAC2 and EHMT2. Interacts (via the RBCC domain) with KOX1 (via the KRAB domain), ZNF268 (via the KRAB domain) and ZNF300 (via the KRAB domain); the interactions increase KOX1, ZNF268 and ZNF300 nuclear localization activities. Interacts with AICDA. The large PER complex involved in the histone methylation is composed of at least PER2, CBX3, TRIM28, SUV39H1 and/or SUV39H2; CBX3 mediates the formation of the complex. Interacts with NR4A3; the interactions potentiates NR4A3 activity on NurRE promoter. Interacts (unphosphorylated or phosphorylated form) with ZBTB1 (via BTB domain). Probably part of a corepressor complex containing ZNF304, TRIM28, SETDB1 and DNMT1. Interacts with ATRX. Forms a complex with ATRX, SETDB1 and ZNF274. Interacts with ZFP568; the interaction mediates ZFP568 transcriptional repression activity. Interacts with RRP1B. Interacts with CRY1. Interacts with ZNF263; recruited to the SIX3 promoter along with other proteins involved in chromatin modification and transcriptional corepression where it contributes to transcriptional repression. Interacts with CYREN (via XLF motif). Interacts with TRIM17; this interaction prevents TRIM28 activity. Interacts with ZNF746. Interacts with PHF13. Interacts with ZNF354C. Interacts with ZNF432; the interaction is independent of PARP1. Post-translationally, ATM-induced phosphorylation on Ser-824 represses sumoylation leading to the de-repression of expression of a subset of genes involved in cell cycle control and apoptosis in response to genotoxic stress. Dephosphorylation by the phosphatases, PPP1CA and PP1CB forms, allows sumoylation and expression of TRIM28 target genes. Sumoylation/desumoylation events regulate TRIM28-mediated transcriptional repression. Sumoylation is required for interaction with CHD3 and SETDB1 and the corepressor activity. Represses and is repressed by Ser-824 phosphorylation. Enhances the TRIM28 corepressor activity, inhibiting transcriptional activity of a number of genes including GADD45A and CDKN1A/p21. Lys-554, Lys-779 and Lys-804 are the major sites of sumoylation. In response to Dox-induced DNA damage, enhanced phosphorylation on Ser-824 prevents sumoylation and allows de-repression of CDKN1A/p21. In terms of processing, auto-ubiquitinated; enhanced by MAGEA2 and MAGEC2. Post-translationally, citrullinated by PADI4. ADP-ribosylated by SIRT6, promoting TRIM28/KAP1 interaction with CBX5, thereby contributing to the packaging of LINE-1 retrotransposon elements into transcriptionally repressive heterochromatin.

Its subcellular location is the nucleus. It catalyses the reaction S-ubiquitinyl-[E2 ubiquitin-conjugating enzyme]-L-cysteine + [acceptor protein]-L-lysine = [E2 ubiquitin-conjugating enzyme]-L-cysteine + N(6)-ubiquitinyl-[acceptor protein]-L-lysine.. It participates in protein modification; protein sumoylation. Functionally, nuclear corepressor for KRAB domain-containing zinc finger proteins (KRAB-ZFPs). Mediates gene silencing by recruiting CHD3, a subunit of the nucleosome remodeling and deacetylation (NuRD) complex, and SETDB1 (which specifically methylates histone H3 at 'Lys-9' (H3K9me)) to the promoter regions of KRAB target genes. Enhances transcriptional repression by coordinating the increase in H3K9me, the decrease in histone H3 'Lys-9 and 'Lys-14' acetylation (H3K9ac and H3K14ac, respectively) and the disposition of HP1 proteins to silence gene expression. Recruitment of SETDB1 induces heterochromatinization. May play a role as a coactivator for CEBPB and NR3C1 in the transcriptional activation of ORM1. Also a corepressor for ERBB4. Inhibits E2F1 activity by stimulating E2F1-HDAC1 complex formation and inhibiting E2F1 acetylation. May serve as a partial backup to prevent E2F1-mediated apoptosis in the absence of RB1. Important regulator of CDKN1A/p21(CIP1). Has E3 SUMO-protein ligase activity toward itself via its PHD-type zinc finger. Specifically sumoylates IRF7, thereby inhibiting its transactivation activity. Ubiquitinates p53/TP53 leading to its proteasomal degradation; the function is enhanced by MAGEC2 and MAGEA2, and possibly MAGEA3 and MAGEA6. Mediates the nuclear localization of KOX1, ZNF268 and ZNF300 transcription factors. Probably forms a corepressor complex required for activated KRAS-mediated promoter hypermethylation and transcriptional silencing of tumor suppressor genes (TSGs) or other tumor-related genes in colorectal cancer (CRC) cells. Required to maintain a transcriptionally repressive state of genes in undifferentiated embryonic stem cells (ESCs). In ESCs, in collaboration with SETDB1, is also required for H3K9me3 and silencing of endogenous and introduced retroviruses in a DNA-methylation independent-pathway. Associates at promoter regions of tumor suppressor genes (TSGs) leading to their gene silencing. The SETDB1-TRIM28-ZNF274 complex may play a role in recruiting ATRX to the 3'-exons of zinc-finger coding genes with atypical chromatin signatures to establish or maintain/protect H3K9me3 at these transcriptionally active regions. Acts as a corepressor for ZFP568. The sequence is that of Transcription intermediary factor 1-beta from Mus musculus (Mouse).